We begin with the raw amino-acid sequence, 645 residues long: Acetyl-coenzyme A synthetase (645 aa).

Residues 190-193 (RGGR), threonine 309, and asparagine 333 contribute to the CoA site. ATP-binding positions include 385 to 387 (GEP), 409 to 414 (DTWWQT), aspartate 498, and arginine 513. Position 521 (serine 521) interacts with CoA. Arginine 524 lines the ATP pocket. The Mg(2+) site is built by valine 535, histidine 537, and valine 540. Arginine 582 serves as a coordination point for CoA. The residue at position 607 (lysine 607) is an N6-acetyllysine.

Belongs to the ATP-dependent AMP-binding enzyme family. Requires Mg(2+) as cofactor. Acetylated. Deacetylation by the SIR2-homolog deacetylase activates the enzyme.

It carries out the reaction acetate + ATP + CoA = acetyl-CoA + AMP + diphosphate. Catalyzes the conversion of acetate into acetyl-CoA (AcCoA), an essential intermediate at the junction of anabolic and catabolic pathways. AcsA undergoes a two-step reaction. In the first half reaction, AcsA combines acetate with ATP to form acetyl-adenylate (AcAMP) intermediate. In the second half reaction, it can then transfer the acetyl group from AcAMP to the sulfhydryl group of CoA, forming the product AcCoA. The protein is Acetyl-coenzyme A synthetase of Beijerinckia indica subsp. indica (strain ATCC 9039 / DSM 1715 / NCIMB 8712).